A 442-amino-acid chain; its full sequence is Probable D-serine dehydratase (442 aa).

Lysine 111 carries the post-translational modification N6-(pyridoxal phosphate)lysine.

This sequence belongs to the serine/threonine dehydratase family. DsdA subfamily. Requires pyridoxal 5'-phosphate as cofactor.

It catalyses the reaction D-serine = pyruvate + NH4(+). The polypeptide is Probable D-serine dehydratase (Sinorhizobium medicae (strain WSM419) (Ensifer medicae)).